The sequence spans 520 residues: Ribonuclease Y (520 aa).

A helical membrane pass occupies residues 4-24 (VSGILLVLIGLLAGVGLGVLL). One can recognise a KH domain in the interval 210 to 270 (TVSVVNLPNE…VRREVARVSL (61 aa)). Residues 336–429 (VLQHSREVAF…VQAADALSGA (94 aa)) enclose the HD domain.

This sequence belongs to the RNase Y family.

It is found in the cell membrane. Endoribonuclease that initiates mRNA decay. This Syntrophobacter fumaroxidans (strain DSM 10017 / MPOB) protein is Ribonuclease Y.